A 501-amino-acid polypeptide reads, in one-letter code: DEAD-box ATP-dependent RNA helicase 36 (501 aa).

Residues 1-68 (MEVDGEARPF…AAAVTEHAGD (68 aa)) form a disordered region. A compositionally biased stretch (pro residues) spans 36–46 (EEPPNPSPSPA). Residues 59–68 (AAAVTEHAGD) are compositionally biased toward low complexity. The Q motif motif lies at 77–105 (STFAELGLSQWLVDVCDSLGMRVPTAVQR). The Helicase ATP-binding domain maps to 108–281 (IPRALEGRDV…ELSGNNSYFF (174 aa)). 121 to 128 (AETGSGKT) serves as a coordination point for ATP. The short motif at 229-232 (DEAD) is the DEAD box element. A Helicase C-terminal domain is found at 292 to 456 (TLKQLYIHVP…AYDGEMRDVN (165 aa)). Basic and acidic residues predominate over residues 473–486 (MADEGHEDKVQARK). The interval 473 to 501 (MADEGHEDKVQARKEQKKRAQERKRKHDE) is disordered. A coiled-coil region spans residues 475–501 (DEGHEDKVQARKEQKKRAQERKRKHDE). Residues 487-501 (EQKKRAQERKRKHDE) show a composition bias toward basic residues.

The protein belongs to the DEAD box helicase family. DDX49/DBP8 subfamily.

It catalyses the reaction ATP + H2O = ADP + phosphate + H(+). The polypeptide is DEAD-box ATP-dependent RNA helicase 36 (Oryza sativa subsp. japonica (Rice)).